The primary structure comprises 465 residues: Alpha-2A adrenergic receptor (465 aa).

Over methionine 1–threonine 48 the chain is Extracellular. Residues asparagine 25 and asparagine 29 are each glycosylated (N-linked (GlcNAc...) asparagine). Residues leucine 49–phenylalanine 74 traverse the membrane as a helical segment. The Cytoplasmic segment spans residues threonine 75–leucine 85. The helical transmembrane segment at phenylalanine 86–methionine 111 threads the bilayer. The Extracellular portion of the chain corresponds to glycine 112–cysteine 121. An intrachain disulfide couples cysteine 121 to cysteine 203. Residues glutamate 122 to leucine 144 form a helical membrane-spanning segment. Residues aspartate 145 to lysine 166 are Cytoplasmic-facing. A helical membrane pass occupies residues alanine 167–isoleucine 187. At glutamate 188–lysine 209 the chain is on the extracellular side. Residues tryptophan 210–valine 232 form a helical membrane-spanning segment. Residues arginine 233–phenylalanine 389 lie on the Cytoplasmic side of the membrane. The tract at residues threonine 242–arginine 368 is disordered. Residues serine 313 to proline 330 show a composition bias toward basic and acidic residues. Residue serine 346 is modified to Phosphoserine. Arginine 368 carries the omega-N-methylarginine modification. Residues valine 390–threonine 410 traverse the membrane as a helical segment. Topologically, residues leucine 411 to lysine 424 are extracellular. A helical transmembrane segment spans residues phenylalanine 425–phenylalanine 444. Residues asparagine 445 to valine 465 are Cytoplasmic-facing. Cysteine 457 carries the S-palmitoyl cysteine lipid modification.

It belongs to the G-protein coupled receptor 1 family. Adrenergic receptor subfamily. ADRA2A sub-subfamily.

The protein resides in the cell membrane. In terms of biological role, alpha-2 adrenergic receptors mediate the catecholamine-induced inhibition of adenylate cyclase through the action of G proteins. The rank order of potency for agonists of this receptor is oxymetazoline &gt; clonidine &gt; epinephrine &gt; norepinephrine &gt; phenylephrine &gt; dopamine &gt; p-synephrine &gt; p-tyramine &gt; serotonin = p-octopamine. For antagonists, the rank order is yohimbine &gt; phentolamine = mianserine &gt; chlorpromazine = spiperone = prazosin &gt; propanolol &gt; alprenolol = pindolol. The chain is Alpha-2A adrenergic receptor from Homo sapiens (Human).